A 428-amino-acid polypeptide reads, in one-letter code: Kynureninase (428 aa).

Residues Thr104, Thr105, 132-135, Asp213, His216, and Tyr238 contribute to the pyridoxal 5'-phosphate site; that span reads FPSD. The residue at position 239 (Lys239) is an N6-(pyridoxal phosphate)lysine. Pyridoxal 5'-phosphate contacts are provided by Trp267 and Thr295.

Belongs to the kynureninase family. As to quaternary structure, homodimer. Pyridoxal 5'-phosphate serves as cofactor.

It carries out the reaction L-kynurenine + H2O = anthranilate + L-alanine + H(+). It catalyses the reaction 3-hydroxy-L-kynurenine + H2O = 3-hydroxyanthranilate + L-alanine + H(+). Its pathway is amino-acid degradation; L-kynurenine degradation; L-alanine and anthranilate from L-kynurenine: step 1/1. The protein operates within cofactor biosynthesis; NAD(+) biosynthesis; quinolinate from L-kynurenine: step 2/3. Functionally, catalyzes the cleavage of L-kynurenine (L-Kyn) and L-3-hydroxykynurenine (L-3OHKyn) into anthranilic acid (AA) and 3-hydroxyanthranilic acid (3-OHAA), respectively. This Bacillus mycoides (strain KBAB4) (Bacillus weihenstephanensis) protein is Kynureninase.